A 184-amino-acid polypeptide reads, in one-letter code: Cytidylate kinase (184 aa).

8–16 is a binding site for ATP; sequence GQPGSGKTT.

The protein belongs to the cytidylate kinase family. Type 2 subfamily.

It is found in the cytoplasm. The enzyme catalyses CMP + ATP = CDP + ADP. The catalysed reaction is dCMP + ATP = dCDP + ADP. This is Cytidylate kinase from Pyrobaculum aerophilum (strain ATCC 51768 / DSM 7523 / JCM 9630 / CIP 104966 / NBRC 100827 / IM2).